Reading from the N-terminus, the 560-residue chain is Putative transport protein VV1438 (560 aa).

The next 5 helical transmembrane spans lie at 5 to 25 (VVLLLQQNPILLIFVVLAIGL), 37 to 57 (LGNSIGVLITSLIMGHLGFSF), 66 to 86 (FMLFIYCVGIEAGPNFFGIFF), 91 to 111 (HYFTLSMVVLVTAVSISYFAS), and 164 to 184 (VGYAMAYLVGLISMIMFAKLL). 2 consecutive RCK C-terminal domains span residues 203-292 (RGLG…FRNG) and 293-376 (KEVF…RIGF). The next 6 helical transmembrane spans lie at 386–406 (LLAFCSFFILGIMFGLVTMTF), 409–429 (VSFSLGNAVGLLLSGITLGFL), 443–463 (ALNMVKDLGLMIFMVGIGLSA), 478–498 (IIGIAFLVSVVPVFFAYLVGA), 506–526 (ALLFGAIIGARTCAPAMDIVN), and 539–559 (AGTYAIANILMTLAGTILIIL).

It belongs to the AAE transporter (TC 2.A.81) family. YbjL subfamily.

The protein localises to the cell membrane. The chain is Putative transport protein VV1438 from Vibrio vulnificus (strain YJ016).